Consider the following 580-residue polypeptide: Arginine--tRNA ligase (580 aa).

A 'HIGH' region motif is present at residues 131–141; the sequence is ANPTGPMHVGH.

Belongs to the class-I aminoacyl-tRNA synthetase family. In terms of assembly, monomer.

Its subcellular location is the cytoplasm. The enzyme catalyses tRNA(Arg) + L-arginine + ATP = L-arginyl-tRNA(Arg) + AMP + diphosphate. The chain is Arginine--tRNA ligase from Cereibacter sphaeroides (strain ATCC 17029 / ATH 2.4.9) (Rhodobacter sphaeroides).